Consider the following 429-residue polypeptide: Enolase (429 aa).

Glutamine 167 is a (2R)-2-phosphoglycerate binding site. Catalysis depends on glutamate 209, which acts as the Proton donor. Mg(2+) contacts are provided by aspartate 246, glutamate 289, and aspartate 316. Residues lysine 341, arginine 370, serine 371, and lysine 392 each coordinate (2R)-2-phosphoglycerate. Lysine 341 functions as the Proton acceptor in the catalytic mechanism.

The protein belongs to the enolase family. Component of the RNA degradosome, a multiprotein complex involved in RNA processing and mRNA degradation. The cofactor is Mg(2+).

The protein localises to the cytoplasm. Its subcellular location is the secreted. It is found in the cell surface. The enzyme catalyses (2R)-2-phosphoglycerate = phosphoenolpyruvate + H2O. The protein operates within carbohydrate degradation; glycolysis; pyruvate from D-glyceraldehyde 3-phosphate: step 4/5. Catalyzes the reversible conversion of 2-phosphoglycerate (2-PG) into phosphoenolpyruvate (PEP). It is essential for the degradation of carbohydrates via glycolysis. The polypeptide is Enolase (Pseudomonas fluorescens (strain ATCC BAA-477 / NRRL B-23932 / Pf-5)).